We begin with the raw amino-acid sequence, 237 residues long: MOB kinase activator 2 (237 aa).

A disordered region spans residues 1–21 (MDWLMGKSKAKPNGKKPAAEE). Zn(2+) contacts are provided by Cys-78, Cys-83, His-157, and His-162. Gly residues predominate over residues 217-229 (GGSGDGAGSGGPG). The segment at 217–237 (GGSGDGAGSGGPGAQNHVKER) is disordered.

It belongs to the MOB1/phocein family. As to quaternary structure, binds STK38 and STK38L. Post-translationally, phosphorylated.

The protein resides in the nucleus. The protein localises to the cytoplasm. It localises to the perinuclear region. Stimulates the autophosphorylation and kinase activity of STK38 and STK38L. The sequence is that of MOB kinase activator 2 (MOB2) from Homo sapiens (Human).